The sequence spans 595 residues: Chaperone protein HscA homolog (595 aa).

It belongs to the heat shock protein 70 family.

Its function is as follows. Chaperone involved in the maturation of iron-sulfur cluster-containing proteins. Has a low intrinsic ATPase activity which is markedly stimulated by HscB. This is Chaperone protein HscA homolog from Rickettsia conorii (strain ATCC VR-613 / Malish 7).